The chain runs to 119 residues: Large ribosomal subunit protein uL18 (119 aa).

It belongs to the universal ribosomal protein uL18 family. Part of the 50S ribosomal subunit; part of the 5S rRNA/L5/L18/L25 subcomplex. Contacts the 5S and 23S rRNAs.

Its function is as follows. This is one of the proteins that bind and probably mediate the attachment of the 5S RNA into the large ribosomal subunit, where it forms part of the central protuberance. This chain is Large ribosomal subunit protein uL18, found in Tropheryma whipplei (strain TW08/27) (Whipple's bacillus).